The primary structure comprises 307 residues: Elongation factor Ts (307 aa).

Residues 80 to 83 form an involved in Mg(2+) ion dislocation from EF-Tu region; that stretch reads TDFV.

It belongs to the EF-Ts family.

The protein resides in the cytoplasm. Functionally, associates with the EF-Tu.GDP complex and induces the exchange of GDP to GTP. It remains bound to the aminoacyl-tRNA.EF-Tu.GTP complex up to the GTP hydrolysis stage on the ribosome. This Rhodospirillum centenum (strain ATCC 51521 / SW) protein is Elongation factor Ts.